Consider the following 309-residue polypeptide: Ubiquitin-conjugating enzyme E2 32 (309 aa).

Residues 11–166 (PAVKRILQEV…ERQKIIDEIH (156 aa)) enclose the UBC core domain. The active-site Glycyl thioester intermediate is the cysteine 93. The chain crosses the membrane as a helical span at residues 275–295 (FTWAAVGLTIAIMVLLLKKFI).

Belongs to the ubiquitin-conjugating enzyme family.

The protein resides in the membrane. The enzyme catalyses S-ubiquitinyl-[E1 ubiquitin-activating enzyme]-L-cysteine + [E2 ubiquitin-conjugating enzyme]-L-cysteine = [E1 ubiquitin-activating enzyme]-L-cysteine + S-ubiquitinyl-[E2 ubiquitin-conjugating enzyme]-L-cysteine.. It functions in the pathway protein modification; protein ubiquitination. Its function is as follows. Accepts the ubiquitin from the E1 complex and catalyzes its covalent attachment to other proteins. The sequence is that of Ubiquitin-conjugating enzyme E2 32 (UBC32) from Arabidopsis thaliana (Mouse-ear cress).